We begin with the raw amino-acid sequence, 177 residues long: Peptide methionine sulfoxide reductase MsrA (177 aa).

Residue Cys15 is part of the active site.

It belongs to the MsrA Met sulfoxide reductase family.

It carries out the reaction L-methionyl-[protein] + [thioredoxin]-disulfide + H2O = L-methionyl-(S)-S-oxide-[protein] + [thioredoxin]-dithiol. It catalyses the reaction [thioredoxin]-disulfide + L-methionine + H2O = L-methionine (S)-S-oxide + [thioredoxin]-dithiol. Functionally, has an important function as a repair enzyme for proteins that have been inactivated by oxidation. Catalyzes the reversible oxidation-reduction of methionine sulfoxide in proteins to methionine. This is Peptide methionine sulfoxide reductase MsrA from Listeria monocytogenes serotype 4b (strain CLIP80459).